Here is a 352-residue protein sequence, read N- to C-terminus: Molybdenum import ATP-binding protein ModC (352 aa).

The region spanning 1 to 229 (MLELNFSQTL…SVMNPWLPKE (229 aa)) is the ABC transporter domain. Position 31–38 (31–38 (GVSGAGKT)) interacts with ATP. The region spanning 289-352 (QTSIRNVLRA…AQIKSVSITA (64 aa)) is the Mop domain.

The protein belongs to the ABC transporter superfamily. Molybdate importer (TC 3.A.1.8) family. The complex is composed of two ATP-binding proteins (ModC), two transmembrane proteins (ModB) and a solute-binding protein (ModA).

The protein localises to the cell inner membrane. It catalyses the reaction molybdate(out) + ATP + H2O = molybdate(in) + ADP + phosphate + H(+). Part of the ABC transporter complex ModABC involved in molybdenum import. Responsible for energy coupling to the transport system. The sequence is that of Molybdenum import ATP-binding protein ModC from Shigella flexneri.